Consider the following 594-residue polypeptide: Protein CBFA2T2 (594 aa).

The residue at position 24 (Ser24) is a Phosphoserine. Residue Lys29 forms a Glycyl lysine isopeptide (Lys-Gly) (interchain with G-Cter in SUMO2) linkage. Positions 48–96 are disordered; sequence GGPRPVSFTPTALSNGINHSPPTLNGAPSPPQRFSNGPASSTSSALTNQ. 2 stretches are compositionally biased toward polar residues: residues 55 to 70 and 79 to 96; these read FTPT…SPPT and QRFS…LTNQ. Residues 98–206 are interaction with PRDM14; that stretch reads LPATCGARQL…QHEHLLLNTS (109 aa). In terms of domain architecture, TAFH spans 104 to 199; the sequence is ARQLSKLKRF…TPSQYLAQHE (96 aa). Residues 220–257 are disordered; that stretch reads VHGNGKRPSPERRDENNFERDTVPPEPPAKRVCTISPA. Residues 227 to 242 are compositionally biased toward basic and acidic residues; it reads PSPERRDENNFERDTV. Ser255 is modified (phosphoserine). The tract at residues 322–368 is nervy homology region 2 (NHR2); it reads QDELVDHRLTEREWADEWKHLDHALNCIMEMVEKTRRSMAVLRRCQE. A disordered region spans residues 388 to 416; it reads RKTGTELVSRQHSPGSTDSLSNDSQREFT. The segment covering 393 to 410 has biased composition (polar residues); it reads ELVSRQHSPGSTDSLSND. The residue at position 400 (Ser400) is a Phosphoserine. The nervy homology region 3 (NHR3) stretch occupies residues 426–475; it reads VEFWKKTEEAVNKVKIQAMSEVQKAVAEAEQKAFEVIATERARMEQTIAD. Residue Lys440 forms a Glycyl lysine isopeptide (Lys-Gly) (interchain with G-Cter in SUMO2) linkage. Residues 442–482 are a coiled coil; the sequence is QAMSEVQKAVAEAEQKAFEVIATERARMEQTIADVKRQAAE. Zn(2+) contacts are provided by Cys498, Cys501, Cys509, Cys512, Cys518, Cys522, His530, and Cys534. An MYND-type zinc finger spans residues 498–534; sequence CWNCGRKASETCSGCNIARYCGSFCQHKDWERHHRLC. The tract at residues 538-594 is disordered; that stretch reads LHGHSPHSQSRPLLPGGRGSARSADCSVPSPALDKTSATTSRSSTPASVTAIDANGL. Ser567 carries the phosphoserine modification. Over residues 573–588 the composition is skewed to low complexity; the sequence is TSATTSRSSTPASVTA.

Belongs to the CBFA2T family. Homooligomer. Homotetramerization is mediated by the NHR2 domain. Interacts with CBFA2T3/MTG16. Can interact with RUNX1T1/CBFA2T1. Heterotetramerization between members of the CBFA2T family is proposed. Interacts with RBP, GFI1, TCF4, PRDM14. Interacts with TAL1 and CBFA2T3/MTG16; the heteromer with CBFA2T3/MTG16 may function in repression of TAL1. As to expression, expressed in embryonic stem cells.

Its subcellular location is the nucleus. Functionally, transcriptional corepressor which facilitates transcriptional repression via its association with DNA-binding transcription factors and recruitment of other corepressors and histone-modifying enzymes. Via association with PRDM14 is involved in regulation of embryonic stem cell (ESC) pluripotency. Involved in primordial germ cell (PCG) formation. Stabilizes PRDM14 and OCT4 on chromatin in a homooligomerization-dependent mannerCan repress the expression of MMP7 in a ZBTB33-dependent manner. Through heteromerization with CBFA2T3/MTG16 may be involved in regulation of the proliferation and the differentiation of erythroid progenitors by repressing the expression of TAL1 target genes. Required for the maintenance of the secretory cell lineage in the small intestine. Can inhibit Notch signaling probably by association with RBPJ and may be involved in GFI1-mediated Paneth cell differentiation. The polypeptide is Protein CBFA2T2 (Cbfa2t2) (Mus musculus (Mouse)).